The following is a 132-amino-acid chain: DNA-binding protein inhibitor ID-2 (132 aa).

A bHLH domain is found at 23 to 75 (ARSKTPVDDPMSLLYNMNDCYSKLKELVPSIPQNKKVSKMEILQHVIDYILDL). Residues 105-114 (LNTDISILSL) carry the Nuclear export signal motif.

Heterodimer with other HLH proteins.

It is found in the cytoplasm. Its subcellular location is the nucleus. Transcriptional regulator (lacking a basic DNA binding domain) which negatively regulates the basic helix-loop-helix (bHLH) transcription factors by forming heterodimers and inhibiting their DNA binding and transcriptional activity. Inhibits the activity of both neurogenic (neurod1/neuroD) and myogenic (myod1/myoD) bHLH factors. May play a role in the regulation of the circadian clock. This Xenopus tropicalis (Western clawed frog) protein is DNA-binding protein inhibitor ID-2.